The primary structure comprises 443 residues: Ribulose bisphosphate carboxylase large chain (443 aa).

N6,N6,N6-trimethyllysine is present on Lys3. Substrate-binding residues include Asn112 and Thr162. The active-site Proton acceptor is the Lys164. Lys166 contacts substrate. 3 residues coordinate Mg(2+): Lys190, Asp192, and Glu193. Position 190 is an N6-carboxylysine (Lys190). The active-site Proton acceptor is His283. Residues Arg284, His316, and Ser368 each contribute to the substrate site.

Belongs to the RuBisCO large chain family. Type I subfamily. Heterohexadecamer of 8 large chains and 8 small chains; disulfide-linked. The disulfide link is formed within the large subunit homodimers. Mg(2+) is required as a cofactor. The disulfide bond which can form in the large chain dimeric partners within the hexadecamer appears to be associated with oxidative stress and protein turnover.

Its subcellular location is the plastid. The protein localises to the chloroplast. It catalyses the reaction 2 (2R)-3-phosphoglycerate + 2 H(+) = D-ribulose 1,5-bisphosphate + CO2 + H2O. The catalysed reaction is D-ribulose 1,5-bisphosphate + O2 = 2-phosphoglycolate + (2R)-3-phosphoglycerate + 2 H(+). Its function is as follows. RuBisCO catalyzes two reactions: the carboxylation of D-ribulose 1,5-bisphosphate, the primary event in carbon dioxide fixation, as well as the oxidative fragmentation of the pentose substrate in the photorespiration process. Both reactions occur simultaneously and in competition at the same active site. This Iris germanica (Bearded iris) protein is Ribulose bisphosphate carboxylase large chain.